A 76-amino-acid polypeptide reads, in one-letter code: Putative cation transport regulator ChaB (76 aa).

It belongs to the ChaB family. As to quaternary structure, monomer.

Functionally, might be a regulator of the sodium-potassium/proton antiporter ChaA. The protein is Putative cation transport regulator ChaB of Escherichia coli O157:H7.